The sequence spans 129 residues: Large ribosomal subunit protein uL22 (129 aa).

The protein belongs to the universal ribosomal protein uL22 family. In terms of assembly, part of the 50S ribosomal subunit.

Functionally, this protein binds specifically to 23S rRNA; its binding is stimulated by other ribosomal proteins, e.g. L4, L17, and L20. It is important during the early stages of 50S assembly. It makes multiple contacts with different domains of the 23S rRNA in the assembled 50S subunit and ribosome. In terms of biological role, the globular domain of the protein is located near the polypeptide exit tunnel on the outside of the subunit, while an extended beta-hairpin is found that lines the wall of the exit tunnel in the center of the 70S ribosome. In Rhizobium etli (strain ATCC 51251 / DSM 11541 / JCM 21823 / NBRC 15573 / CFN 42), this protein is Large ribosomal subunit protein uL22.